The sequence spans 119 residues: Protein MGF 110-11L (119 aa).

Positions Met-1–Ala-17 are cleaved as a signal peptide.

It belongs to the asfivirus MGF 110 family.

The sequence is that of Protein MGF 110-11L from Ornithodoros (relapsing fever ticks).